Consider the following 647-residue polypeptide: DNA mismatch repair protein MutL (647 aa).

The disordered stretch occupies residues 389–423; it reads SESSVSSVANKQQPTVKQAKRSADDSDSEHGKLDY. Over residues 409-423 the composition is skewed to basic and acidic residues; it reads RSADDSDSEHGKLDY.

Belongs to the DNA mismatch repair MutL/HexB family.

This protein is involved in the repair of mismatches in DNA. It is required for dam-dependent methyl-directed DNA mismatch repair. May act as a 'molecular matchmaker', a protein that promotes the formation of a stable complex between two or more DNA-binding proteins in an ATP-dependent manner without itself being part of a final effector complex. This Streptococcus thermophilus (strain ATCC BAA-491 / LMD-9) protein is DNA mismatch repair protein MutL.